Consider the following 726-residue polypeptide: Beta-glucosidase cel3A (726 aa).

Positions 1 to 20 (MASRLVAGLQVLALAGTATA) are cleaved as a signal peptide. N-linked (GlcNAc...) asparagine glycans are attached at residues Asn223 and Asn592.

It belongs to the glycosyl hydrolase 3 family.

Its subcellular location is the secreted. The catalysed reaction is Hydrolysis of terminal, non-reducing beta-D-glucosyl residues with release of beta-D-glucose.. Its pathway is glycan metabolism; cellulose degradation. Functionally, beta-glucosidases are one of a number of cellulolytic enzymes involved in the degradation of cellulosic biomass. Catalyzes the last step releasing glucose from the inhibitory cellobiose. Has a broad substrate specificity but preferentially hydrolyzes highly polymerized 1,3- and 1,4-beta-glucans. The sequence is that of Beta-glucosidase cel3A from Pyricularia oryzae (strain 70-15 / ATCC MYA-4617 / FGSC 8958) (Rice blast fungus).